Here is a 386-residue protein sequence, read N- to C-terminus: MNTLGRLFRVTTWGESHGPALGAVVDGCPAGLPLSEDDVQRELDRRRPGQSGVSTPRSERDRVEILSGVHEGRTLGTPISMIVWNEDVDSSKYEPIRTRPRPGHADVTYRWKYGHVDYRGGGRASGRTTVGIVMGGAVAKKLLREAPSNDPLGIEIVGHVVRVGSVEADPGDLSAEEIMQYAESNPVRCADPDAAEEMLGEIERARENGDSVGGTIEVIAENVPPGLGDPVFGRLDGELAGALMNIPAVKAVEVGSGVRCSEMHGSEHNDPIWWDGHPVVDGDNSGGVLGGISHGGRLVVRVHVKPTPSVSVPQRTVDLESEEEVEIEVEGRHDPCICPRAVPVAESVVAIVLADAVLRAGYVNPDSVELPAASVEDRWRTLKRHL.

The segment at 32–60 (LPLSEDDVQRELDRRRPGQSGVSTPRSER) is disordered. A compositionally biased stretch (basic and acidic residues) spans 38–47 (DVQRELDRRR). Arg46 provides a ligand contact to NADP(+). Residues 123–125 (RAS), Gly290, 305–309 (KPTPS), and Arg332 contribute to the FMN site.

Belongs to the chorismate synthase family. Requires FMNH2 as cofactor.

The enzyme catalyses 5-O-(1-carboxyvinyl)-3-phosphoshikimate = chorismate + phosphate. It functions in the pathway metabolic intermediate biosynthesis; chorismate biosynthesis; chorismate from D-erythrose 4-phosphate and phosphoenolpyruvate: step 7/7. Functionally, catalyzes the anti-1,4-elimination of the C-3 phosphate and the C-6 proR hydrogen from 5-enolpyruvylshikimate-3-phosphate (EPSP) to yield chorismate, which is the branch point compound that serves as the starting substrate for the three terminal pathways of aromatic amino acid biosynthesis. This reaction introduces a second double bond into the aromatic ring system. In Methanopyrus kandleri (strain AV19 / DSM 6324 / JCM 9639 / NBRC 100938), this protein is Chorismate synthase.